Consider the following 172-residue polypeptide: Cytochrome c oxidase subunit 4 isoform 2, mitochondrial (172 aa).

The transit peptide at 1 to 18 (MFSRATRSLVMKTGGLRT) directs the protein to the mitochondrion. The segment at 1-33 (MFSRATRSLVMKTGGLRTQGTHSPGSAASSSQR) is disordered. The span at 16–33 (LRTQGTHSPGSAASSSQR) shows a compositional bias: polar residues. The Mitochondrial matrix portion of the chain corresponds to 19–101 (QGTHSPGSAA…TFAEMNHRSN (83 aa)). Residues 102–127 (EWKTVMGCVFFFIGFTALVIWWQRVY) traverse the membrane as a helical segment. Residues 128 to 172 (VFPKKVVTLTEERKAQQLQRLLDMKSNPIQGLSAHWDYEKKEWKK) lie on the Mitochondrial intermembrane side of the membrane.

Belongs to the cytochrome c oxidase IV family. As to quaternary structure, component of the cytochrome c oxidase (complex IV, CIV), a multisubunit enzyme composed of 14 subunits. The complex is composed of a catalytic core of 3 subunits MT-CO1, MT-CO2 and MT-CO3, encoded in the mitochondrial DNA, and 11 supernumerary subunits COX4I, COX5A, COX5B, COX6A, COX6B, COX6C, COX7A, COX7B, COX7C, COX8 and NDUFA4, which are encoded in the nuclear genome. The complex exists as a monomer or a dimer and forms supercomplexes (SCs) in the inner mitochondrial membrane with NADH-ubiquinone oxidoreductase (complex I, CI) and ubiquinol-cytochrome c oxidoreductase (cytochrome b-c1 complex, complex III, CIII), resulting in different assemblies (supercomplex SCI(1)III(2)IV(1) and megacomplex MCI(2)III(2)IV(2)). In terms of tissue distribution, highly expressed in lung.

Its subcellular location is the mitochondrion inner membrane. Its pathway is energy metabolism; oxidative phosphorylation. Component of the cytochrome c oxidase, the last enzyme in the mitochondrial electron transport chain which drives oxidative phosphorylation. The respiratory chain contains 3 multisubunit complexes succinate dehydrogenase (complex II, CII), ubiquinol-cytochrome c oxidoreductase (cytochrome b-c1 complex, complex III, CIII) and cytochrome c oxidase (complex IV, CIV), that cooperate to transfer electrons derived from NADH and succinate to molecular oxygen, creating an electrochemical gradient over the inner membrane that drives transmembrane transport and the ATP synthase. Cytochrome c oxidase is the component of the respiratory chain that catalyzes the reduction of oxygen to water. Electrons originating from reduced cytochrome c in the intermembrane space (IMS) are transferred via the dinuclear copper A center (CU(A)) of subunit 2 and heme A of subunit 1 to the active site in subunit 1, a binuclear center (BNC) formed by heme A3 and copper B (CU(B)). The BNC reduces molecular oxygen to 2 water molecules using 4 electrons from cytochrome c in the IMS and 4 protons from the mitochondrial matrix. The sequence is that of Cytochrome c oxidase subunit 4 isoform 2, mitochondrial (Cox4i2) from Rattus norvegicus (Rat).